The chain runs to 79 residues: Small ribosomal subunit protein uS17 (79 aa).

Belongs to the universal ribosomal protein uS17 family. In terms of assembly, part of the 30S ribosomal subunit.

In terms of biological role, one of the primary rRNA binding proteins, it binds specifically to the 5'-end of 16S ribosomal RNA. This chain is Small ribosomal subunit protein uS17, found in Caulobacter sp. (strain K31).